A 193-amino-acid polypeptide reads, in one-letter code: dCTP deaminase (193 aa).

DCTP is bound by residues 110–115, D128, 136–138, Y171, K178, and Q182; these read RSSLAR and VLE. E138 acts as the Proton donor/acceptor in catalysis. The segment at 174-193 is disordered; sequence RKNAKYKDQQEAVASRISQD.

It belongs to the dCTP deaminase family. As to quaternary structure, homotrimer.

It catalyses the reaction dCTP + H2O + H(+) = dUTP + NH4(+). It participates in pyrimidine metabolism; dUMP biosynthesis; dUMP from dCTP (dUTP route): step 1/2. Catalyzes the deamination of dCTP to dUTP. The sequence is that of dCTP deaminase from Shewanella sp. (strain W3-18-1).